A 165-amino-acid chain; its full sequence is Nucleotide-binding protein CFF8240_1664 (165 aa).

The protein belongs to the YajQ family.

Nucleotide-binding protein. This is Nucleotide-binding protein CFF8240_1664 from Campylobacter fetus subsp. fetus (strain 82-40).